We begin with the raw amino-acid sequence, 477 residues long: Ribulose bisphosphate carboxylase large chain (477 aa).

The propeptide occupies 1–2; sequence MS. The residue at position 3 (Pro3) is an N-acetylproline. N6,N6,N6-trimethyllysine is present on Lys14. Substrate-binding residues include Asn123 and Thr173. Residue Lys175 is the Proton acceptor of the active site. Substrate is bound at residue Lys177. Residues Lys201, Asp203, and Glu204 each coordinate Mg(2+). Lys201 carries the N6-carboxylysine modification. The Proton acceptor role is filled by His294. Substrate-binding residues include Arg295, His327, and Ser379.

It belongs to the RuBisCO large chain family. Type I subfamily. As to quaternary structure, heterohexadecamer of 8 large chains and 8 small chains; disulfide-linked. The disulfide link is formed within the large subunit homodimers. It depends on Mg(2+) as a cofactor. Post-translationally, the disulfide bond which can form in the large chain dimeric partners within the hexadecamer appears to be associated with oxidative stress and protein turnover.

The protein localises to the plastid. Its subcellular location is the chloroplast. It catalyses the reaction 2 (2R)-3-phosphoglycerate + 2 H(+) = D-ribulose 1,5-bisphosphate + CO2 + H2O. The enzyme catalyses D-ribulose 1,5-bisphosphate + O2 = 2-phosphoglycolate + (2R)-3-phosphoglycerate + 2 H(+). Its function is as follows. RuBisCO catalyzes two reactions: the carboxylation of D-ribulose 1,5-bisphosphate, the primary event in carbon dioxide fixation, as well as the oxidative fragmentation of the pentose substrate in the photorespiration process. Both reactions occur simultaneously and in competition at the same active site. This is Ribulose bisphosphate carboxylase large chain from Manihot esculenta (Cassava).